Here is a 274-residue protein sequence, read N- to C-terminus: 2,3,4,5-tetrahydropyridine-2,6-dicarboxylate N-succinyltransferase (274 aa).

Residues arginine 104 and aspartate 141 each coordinate substrate.

This sequence belongs to the transferase hexapeptide repeat family. In terms of assembly, homotrimer.

It localises to the cytoplasm. The catalysed reaction is (S)-2,3,4,5-tetrahydrodipicolinate + succinyl-CoA + H2O = (S)-2-succinylamino-6-oxoheptanedioate + CoA. It participates in amino-acid biosynthesis; L-lysine biosynthesis via DAP pathway; LL-2,6-diaminopimelate from (S)-tetrahydrodipicolinate (succinylase route): step 1/3. The chain is 2,3,4,5-tetrahydropyridine-2,6-dicarboxylate N-succinyltransferase from Shigella dysenteriae serotype 1 (strain Sd197).